A 177-amino-acid chain; its full sequence is Co-chaperone protein HscB homolog (177 aa).

In terms of domain architecture, J spans 8–80; it reads DFFALFGLPR…LPRAQYMLEL (73 aa).

It belongs to the HscB family. In terms of assembly, interacts with HscA and stimulates its ATPase activity.

Its function is as follows. Co-chaperone involved in the maturation of iron-sulfur cluster-containing proteins. Seems to help targeting proteins to be folded toward HscA. This Aromatoleum aromaticum (strain DSM 19018 / LMG 30748 / EbN1) (Azoarcus sp. (strain EbN1)) protein is Co-chaperone protein HscB homolog.